We begin with the raw amino-acid sequence, 830 residues long: Interleukin-4 receptor subunit alpha (830 aa).

An N-terminal signal peptide occupies residues 1-32 (MGWLCPGLTFSVSCLILVWAAGSGVTCVSPGG). Over 33–240 (VRVLEWPICL…NYYEEPLEQR (208 aa)) the chain is Extracellular. The cysteines at positions 41 and 51 are disulfide-linked. N-linked (GlcNAc...) asparagine glycans are attached at residues Asn60 and Asn78. Cys82 and Cys94 are disulfide-bonded. Asn120, Asn142, and Asn170 each carry an N-linked (GlcNAc...) asparagine glycan. The region spanning 133–232 (APRNLMVHAN…WSPSVKWLNY (100 aa)) is the Fibronectin type-III domain. Ser172 is subject to Phosphoserine. Asn184 and Asn217 each carry an N-linked (GlcNAc...) asparagine glycan. A WSXWS motif motif is present at residues 220–224 (WSEWS). The helical transmembrane segment at 241–264 (LPLGVSISCVVILIICLSCYFGII) threads the bilayer. Topologically, residues 265–830 (RIKKEWWDQI…SPGPACMDTS (566 aa)) are cytoplasmic. Positions 270–278 (WWDQIPNPA) match the Box 1 motif motif. Residues 378 to 387 (ENEEEEEEED) show a composition bias toward acidic residues. Disordered regions lie at residues 378–403 (ENEE…GSFQ) and 450–488 (MPWA…SLAS). Residues 444-564 (ENASAPMPWA…ETWEQILRQS (121 aa)) form a required for IRS1 activation and IL4-induced cell growth region. The residue at position 504 (Tyr504) is a Phosphotyrosine. Disordered regions lie at residues 508–610 (STFL…EAGY) and 623–696 (CPGT…DGQK). Positions 518-534 (GELDSDPELAEALEEVE) are enriched in acidic residues. Over residues 538-551 (PAAPQPSEPPPTLQ) the composition is skewed to pro residues. Residues 564–662 (SVLQRRAAPA…VPTPLFTFGL (99 aa)) form a required for IL4-induced gene expression region. Residues 570–582 (AAPAPASGPSSSG) show a composition bias toward low complexity. A phosphotyrosine mark is found at Tyr583 and Tyr610. Residues 623–635 (CPGTSGLEPSSGE) are compositionally biased toward polar residues. Tyr638 bears the Phosphotyrosine mark. 2 stretches are compositionally biased toward pro residues: residues 646 to 655 (PGCPETPVPT) and 665 to 676 (EPPPSPQNPPFP). Residues 716–721 (IVYSAL) carry the ITIM motif motif. The tract at residues 811–830 (SQTPTAVAMLSPGPACMDTS) is disordered.

The protein belongs to the type I cytokine receptor family. Type 4 subfamily. In terms of assembly, the functional IL4 receptor is formed by initial binding of IL4 to IL4R. Subsequent recruitment to the complex of the common gamma chain, in immune cells, creates a type I receptor and, in non-immune cells, of IL13RA1 forms a type II receptor. IL4R can also interact with the IL13/IL13RA1 complex to form a similar type II receptor. Interacts with PIK3C3. Interacts with the SH2-containing phosphatases, PTPN6/SHIP1, PTPN11/SHIP2 and INPP5D/SHIP. Interacts with JAK1 through a Box 1-containing region; inhibited by SOCS5. Interacts with SOCS5; inhibits IL4 signaling. Interacts with JAK3. Interacts with CLM1. Interacts with IL13RA2. On IL4 binding, phosphorylated on C-terminal tyrosine residues.

The protein resides in the membrane. Receptor for both interleukin 4 and interleukin 13. Couples to the JAK1/2/3-STAT6 pathway. The IL4 response is involved in promoting Th2 differentiation. The IL4/IL13 responses are involved in regulating IgE production and, chemokine and mucus production at sites of allergic inflammation. In certain cell types, can signal through activation of insulin receptor substrates, IRS1/IRS2. The chain is Interleukin-4 receptor subunit alpha (IL4R) from Sus scrofa (Pig).